Here is a 429-residue protein sequence, read N- to C-terminus: 3-phosphoshikimate 1-carboxyvinyltransferase (429 aa).

3-phosphoshikimate is bound by residues Lys-23, Ser-24, and Arg-28. Residue Lys-23 coordinates phosphoenolpyruvate. Residues Gly-95 and Arg-123 each coordinate phosphoenolpyruvate. 3-phosphoshikimate contacts are provided by Ser-168, Gln-170, Asp-316, and Lys-343. Gln-170 is a phosphoenolpyruvate binding site. Catalysis depends on Asp-316, which acts as the Proton acceptor. Positions 347 and 389 each coordinate phosphoenolpyruvate.

This sequence belongs to the EPSP synthase family. In terms of assembly, monomer.

It is found in the cytoplasm. The catalysed reaction is 3-phosphoshikimate + phosphoenolpyruvate = 5-O-(1-carboxyvinyl)-3-phosphoshikimate + phosphate. It participates in metabolic intermediate biosynthesis; chorismate biosynthesis; chorismate from D-erythrose 4-phosphate and phosphoenolpyruvate: step 6/7. Its function is as follows. Catalyzes the transfer of the enolpyruvyl moiety of phosphoenolpyruvate (PEP) to the 5-hydroxyl of shikimate-3-phosphate (S3P) to produce enolpyruvyl shikimate-3-phosphate and inorganic phosphate. In Bacillus cereus (strain AH187), this protein is 3-phosphoshikimate 1-carboxyvinyltransferase.